Consider the following 492-residue polypeptide: Glutamate--cysteine ligase A, chloroplastic (492 aa).

A disulfide bond links Cys156 and Cys376.

Belongs to the carboxylate-amine ligase family. Glutamate--cysteine ligase type 2 subfamily. Homodimer or monomer when oxidized or reduced, respectively. The Cys-156-Cys-376 disulfide bridge is known to modulate the enzyme activity according to the redox status. The oxidized form constitutes the active enzyme.

The protein localises to the plastid. The protein resides in the chloroplast. It carries out the reaction L-cysteine + L-glutamate + ATP = gamma-L-glutamyl-L-cysteine + ADP + phosphate + H(+). It participates in sulfur metabolism; glutathione biosynthesis; glutathione from L-cysteine and L-glutamate: step 1/2. The polypeptide is Glutamate--cysteine ligase A, chloroplastic (GSH1-1) (Oryza sativa subsp. indica (Rice)).